The sequence spans 108 residues: MGVQVETISPGDGRTFPKRGQTCVVHYTGMLEDGKKFDSSRDRNKPFKFTLGKQEVIRGWEEGVAQMSVGQRAKLIISSDYAYGATGHPGIIPPHATLVFDVELLKLE.

The region spanning 20-108 (GQTCVVHYTG…VFDVELLKLE (89 aa)) is the PPIase FKBP-type domain. K53 bears the N6-acetyllysine; alternate mark. An N6-succinyllysine; alternate modification is found at K53.

Belongs to the FKBP-type PPIase family. FKBP1 subfamily. In terms of assembly, interacts with TGFBR1; prevents TGFBR1 phosphorylation by TGFBR2 and stabilizes it in the inactive conformation. Interacts with ACVR1B and SMAD7. Identified in a complex composed of RYR1, PDE4D, PKA, FKBP1A and protein phosphatase 1 (PP1). Interacts directly with RYR2 and RYR3. Interacts directly with RYR1. Interacts with GLMN; rapamycin and FK506 abolish the interaction with GLMN in a dose dependent manner.

The protein localises to the cytoplasm. Its subcellular location is the cytosol. It localises to the sarcoplasmic reticulum membrane. It catalyses the reaction [protein]-peptidylproline (omega=180) = [protein]-peptidylproline (omega=0). Its activity is regulated as follows. Inhibited by both FK506 and rapamycin. Functionally, keeps in an inactive conformation TGFBR1, the TGF-beta type I serine/threonine kinase receptor, preventing TGF-beta receptor activation in absence of ligand. Recruits SMAD7 to ACVR1B which prevents the association of SMAD2 and SMAD3 with the activin receptor complex, thereby blocking the activin signal. May modulate the RYR1 calcium channel activity. PPIases accelerate the folding of proteins. It catalyzes the cis-trans isomerization of proline imidic peptide bonds in oligopeptides. This Mus musculus (Mouse) protein is Peptidyl-prolyl cis-trans isomerase FKBP1A (Fkbp1a).